A 114-amino-acid polypeptide reads, in one-letter code: U17-barytoxin-Tl1a (114 aa).

Positions 1-20 (MKTIIVFLSLLVLATKFGDA) are cleaved as a signal peptide. A propeptide spanning residues 21-74 (NEGVNQEQMKEVIQNEFREDFLNEMAPMSLLQQLEAIESTLLEKEADRNSRQKR) is cleaved from the precursor. 3 disulfide bridges follow: Cys75–Cys88, Cys82–Cys93, and Cys87–Cys108.

It belongs to the neurotoxin 14 (magi-1) family. 03 (ICK-30-40) subfamily. As to expression, expressed by the venom gland.

Its subcellular location is the secreted. Functionally, ion channel inhibitor. This Trittame loki (Brush-footed trapdoor spider) protein is U17-barytoxin-Tl1a.